A 214-amino-acid chain; its full sequence is Charged multivesicular body protein 2b-B (214 aa).

A coiled-coil region spans residues 25–55 (QRAITRDRAALEKQEKQLEMEIKKMAKTGNK). The segment at 178-200 (MAKAPSAAKGLPSTSAAKSKGIS) is disordered. The short motif at 202–212 (EEIERQLKALG) is the MIT-interacting motif element.

The protein belongs to the SNF7 family. In terms of assembly, probable core component of the endosomal sorting required for transport complex III (ESCRT-III). ESCRT-III components are thought to multimerize to form a flat lattice on the perimeter membrane of the endosome.

It localises to the cytoplasm. The protein localises to the cytosol. It is found in the late endosome membrane. Probable core component of the endosomal sorting required for transport complex III (ESCRT-III) which is involved in multivesicular bodies (MVBs) formation and sorting of endosomal cargo proteins into MVBs. MVBs contain intraluminal vesicles (ILVs) that are generated by invagination and scission from the limiting membrane of the endosome and mostly are delivered to lysosomes enabling degradation of membrane proteins, such as stimulated growth factor receptors, lysosomal enzymes and lipids. The polypeptide is Charged multivesicular body protein 2b-B (chmp2b-b) (Xenopus laevis (African clawed frog)).